The sequence spans 830 residues: Leucine--tRNA ligase (830 aa).

Positions 48–58 match the 'HIGH' region motif; that stretch reads PYPSGAIHMGH. Positions 596 to 600 match the 'KMSKS' region motif; sequence KMSKS. Residue K599 participates in ATP binding.

This sequence belongs to the class-I aminoacyl-tRNA synthetase family.

The protein localises to the cytoplasm. The enzyme catalyses tRNA(Leu) + L-leucine + ATP = L-leucyl-tRNA(Leu) + AMP + diphosphate. This Helicobacter hepaticus (strain ATCC 51449 / 3B1) protein is Leucine--tRNA ligase.